The following is a 270-amino-acid chain: MTLRIGVVGAGGRMGRQLIQAIHAAEGVELSAAFERKGSSLIGSDAGELAGIGHIGVTVEESLTDRADNFDVLIDFTRPEGSLEHLACCAAKGKNVILGTTGFDDAGKAAIKAAAEKIGIVFASNYSVGVNLVFKLLEKAAKVMGDYCDIEIIEAHHRHKVDAPSGTALSMGEHIAKTLGRDLKTHGVFCREGITGERKRDEIGFSTIRAADVVGEHTVWFADIGERVEIAHKASSRMTFANGAVRAAKWIADKKQGLFDMTDVLDLNNL.

NAD(+) is bound by residues 9–14 (GAGGRM) and glutamate 35. Arginine 36 is an NADP(+) binding site. Residues 99–101 (GTT) and 123–126 (ASNY) each bind NAD(+). Residue histidine 156 is the Proton donor/acceptor of the active site. A (S)-2,3,4,5-tetrahydrodipicolinate-binding site is contributed by histidine 157. Catalysis depends on lysine 160, which acts as the Proton donor. Residue 166 to 167 (GT) coordinates (S)-2,3,4,5-tetrahydrodipicolinate.

Belongs to the DapB family.

Its subcellular location is the cytoplasm. It carries out the reaction (S)-2,3,4,5-tetrahydrodipicolinate + NAD(+) + H2O = (2S,4S)-4-hydroxy-2,3,4,5-tetrahydrodipicolinate + NADH + H(+). It catalyses the reaction (S)-2,3,4,5-tetrahydrodipicolinate + NADP(+) + H2O = (2S,4S)-4-hydroxy-2,3,4,5-tetrahydrodipicolinate + NADPH + H(+). It functions in the pathway amino-acid biosynthesis; L-lysine biosynthesis via DAP pathway; (S)-tetrahydrodipicolinate from L-aspartate: step 4/4. Catalyzes the conversion of 4-hydroxy-tetrahydrodipicolinate (HTPA) to tetrahydrodipicolinate. The protein is 4-hydroxy-tetrahydrodipicolinate reductase of Actinobacillus succinogenes (strain ATCC 55618 / DSM 22257 / CCUG 43843 / 130Z).